The chain runs to 245 residues: Cytochrome P450 CYP82H23 (245 aa).

Belongs to the cytochrome P450 family. Heme serves as cofactor.

Functionally, probable heme-thiolate monooxygenase. This is Cytochrome P450 CYP82H23 from Panax ginseng (Korean ginseng).